A 1013-amino-acid polypeptide reads, in one-letter code: Chitin synthase A (1013 aa).

A glycan (N-linked (GlcNAc...) asparagine) is linked at asparagine 10. Disordered stretches follow at residues 26–83 and 95–218; these read RYSY…AADW and ERAD…RRGV. Low complexity predominate over residues 64-81; it reads TASRPASPARPWSPTRAA. Polar residues predominate over residues 154 to 173; the sequence is TISSRHGPQGSVQSFTSEST. Residues asparagine 194 and asparagine 316 are each glycosylated (N-linked (GlcNAc...) asparagine). 5 consecutive transmembrane segments (helical) span residues 646 to 666, 686 to 706, 721 to 741, 759 to 779, and 792 to 811; these read LLQL…FFFI, IFIV…IFSM, MIVY…LIVL, LFVN…FTSF, and AQYF…YAFC. An N-linked (GlcNAc...) asparagine glycan is attached at asparagine 837. Transmembrane regions (helical) follow at residues 892 to 912 and 919 to 939; these read VSVW…VYGV and VYLA…AIGS. N-linked (GlcNAc...) asparagine glycosylation is found at asparagine 967, asparagine 980, asparagine 989, and asparagine 995.

The protein belongs to the chitin synthase family. Class II subfamily. As to expression, mainly expressed in the metulae, phialides, and conidia.

It localises to the cell membrane. The protein resides in the cell septum. The catalysed reaction is [(1-&gt;4)-N-acetyl-beta-D-glucosaminyl](n) + UDP-N-acetyl-alpha-D-glucosamine = [(1-&gt;4)-N-acetyl-beta-D-glucosaminyl](n+1) + UDP + H(+). Its function is as follows. Polymerizes chitin, a structural polymer of the cell wall and septum, by transferring the sugar moiety of UDP-GlcNAc to the non-reducing end of the growing chitin polymer. Seems not to be involved in hyphal growth, but, with chsC, chsA shares critical functions in hyphal wall integrity and differentiation. ChsA and chsC share also overlapping roles in septum formation. Invoved in the production of the asexual spores (conidia) that are formed by differentiated aerial hyphae called conidiophores. The protein is Chitin synthase A of Emericella nidulans (strain FGSC A4 / ATCC 38163 / CBS 112.46 / NRRL 194 / M139) (Aspergillus nidulans).